Here is a 201-residue protein sequence, read N- to C-terminus: Large ribosomal subunit protein uL4 (201 aa).

Positions 45–66 (AQKSRAEVVGSNKKPWRQKGTG) are disordered.

The protein belongs to the universal ribosomal protein uL4 family. As to quaternary structure, part of the 50S ribosomal subunit.

Its function is as follows. One of the primary rRNA binding proteins, this protein initially binds near the 5'-end of the 23S rRNA. It is important during the early stages of 50S assembly. It makes multiple contacts with different domains of the 23S rRNA in the assembled 50S subunit and ribosome. Forms part of the polypeptide exit tunnel. In Baumannia cicadellinicola subsp. Homalodisca coagulata, this protein is Large ribosomal subunit protein uL4.